The sequence spans 388 residues: Succinate--CoA ligase [ADP-forming] subunit beta (388 aa).

Positions 9-244 constitute an ATP-grasp domain; that stretch reads KEILRKYNVP…LDEEDPAEIE (236 aa). ATP-binding positions include lysine 46, 53–55, glutamate 99, alanine 102, and glutamate 107; that span reads GRG. Residues asparagine 199 and aspartate 213 each contribute to the Mg(2+) site. Substrate contacts are provided by residues asparagine 264 and 321-323; that span reads GIM.

It belongs to the succinate/malate CoA ligase beta subunit family. In terms of assembly, heterotetramer of two alpha and two beta subunits. The cofactor is Mg(2+).

The enzyme catalyses succinate + ATP + CoA = succinyl-CoA + ADP + phosphate. It catalyses the reaction GTP + succinate + CoA = succinyl-CoA + GDP + phosphate. It functions in the pathway carbohydrate metabolism; tricarboxylic acid cycle; succinate from succinyl-CoA (ligase route): step 1/1. Succinyl-CoA synthetase functions in the citric acid cycle (TCA), coupling the hydrolysis of succinyl-CoA to the synthesis of either ATP or GTP and thus represents the only step of substrate-level phosphorylation in the TCA. The beta subunit provides nucleotide specificity of the enzyme and binds the substrate succinate, while the binding sites for coenzyme A and phosphate are found in the alpha subunit. This chain is Succinate--CoA ligase [ADP-forming] subunit beta, found in Ralstonia pickettii (strain 12J).